We begin with the raw amino-acid sequence, 116 residues long: Fluoride-specific ion channel FluC 1 (116 aa).

4 consecutive transmembrane segments (helical) span residues 1–21 (MYAP…RYLV), 32–52 (FPLG…WLAG), 54–74 (GAAD…FTTF), and 93–113 (VVVY…LGYH). Na(+) contacts are provided by glycine 69 and threonine 72.

It belongs to the fluoride channel Fluc/FEX (TC 1.A.43) family.

It is found in the cell membrane. The catalysed reaction is fluoride(in) = fluoride(out). Its activity is regulated as follows. Na(+) is not transported, but it plays an essential structural role and its presence is essential for fluoride channel function. Fluoride-specific ion channel. Important for reducing fluoride concentration in the cell, thus reducing its toxicity. The chain is Fluoride-specific ion channel FluC 1 from Geobacillus kaustophilus (strain HTA426).